A 164-amino-acid chain; its full sequence is Phosphopantetheine adenylyltransferase (164 aa).

Substrate is bound at residue Ser9. Residues 9–10 (SF) and His17 each bind ATP. The substrate site is built by Lys41, Leu73, and Lys87. ATP-binding positions include 88–90 (GLR), Glu98, and 122–128 (YSYLSSS).

This sequence belongs to the bacterial CoaD family. In terms of assembly, homohexamer. The cofactor is Mg(2+).

Its subcellular location is the cytoplasm. It carries out the reaction (R)-4'-phosphopantetheine + ATP + H(+) = 3'-dephospho-CoA + diphosphate. It functions in the pathway cofactor biosynthesis; coenzyme A biosynthesis; CoA from (R)-pantothenate: step 4/5. Reversibly transfers an adenylyl group from ATP to 4'-phosphopantetheine, yielding dephospho-CoA (dPCoA) and pyrophosphate. This chain is Phosphopantetheine adenylyltransferase, found in Rhodococcus jostii (strain RHA1).